Consider the following 156-residue polypeptide: MKLQLVAVGTRMPAWVTTGFEEYQRRFPRDMAFELIEIPAGKRGKNADIARILQKEGEQMLAAIPKGNHIVSLDLPGKNWTTPELATQLNRWQLDGRDVSLLIGGPEGLAPACKQAANQSWCLSALTLPHPLVRVLVAESLYRAWSINNNHPYHRE.

Residues Leu-73, Gly-104, and 123–128 (LSALTL) contribute to the S-adenosyl-L-methionine site.

This sequence belongs to the RNA methyltransferase RlmH family. Homodimer.

The protein resides in the cytoplasm. It carries out the reaction pseudouridine(1915) in 23S rRNA + S-adenosyl-L-methionine = N(3)-methylpseudouridine(1915) in 23S rRNA + S-adenosyl-L-homocysteine + H(+). Its function is as follows. Specifically methylates the pseudouridine at position 1915 (m3Psi1915) in 23S rRNA. In Shewanella loihica (strain ATCC BAA-1088 / PV-4), this protein is Ribosomal RNA large subunit methyltransferase H.